The sequence spans 397 residues: Cytochrome b (397 aa).

Transmembrane regions (helical) follow at residues 38 to 58 (FGSL…FLAM), 82 to 104 (WLLR…LHIF), 119 to 139 (VWCL…IGYV), and 185 to 205 (FFSL…LHLA). Residues His-88 and His-102 each coordinate heme b. His-189 and His-203 together coordinate heme b. His-208 provides a ligand contact to a ubiquinone. The next 4 membrane-spanning stretches (helical) occupy residues 231–251 (FYVK…IWIF), 295–315 (AGGV…PFFK), 327–347 (IYQG…WIGC), and 354–373 (FVTI…AITP).

Belongs to the cytochrome b family. In terms of assembly, the main subunits of complex b-c1 are: cytochrome b, cytochrome c1 and the Rieske protein. It depends on heme b as a cofactor.

Its subcellular location is the mitochondrion inner membrane. In terms of biological role, component of the ubiquinol-cytochrome c reductase complex (complex III or cytochrome b-c1 complex) that is part of the mitochondrial respiratory chain. The b-c1 complex mediates electron transfer from ubiquinol to cytochrome c. Contributes to the generation of a proton gradient across the mitochondrial membrane that is then used for ATP synthesis. In Oryza sativa subsp. japonica (Rice), this protein is Cytochrome b (MT-CYB).